A 436-amino-acid polypeptide reads, in one-letter code: Aminotransferase tdiD (436 aa).

Positions 30, 86, 148, and 202 each coordinate substrate. Position 270 is an N6-(pyridoxal phosphate)lysine (Lys-270). Position 407 (Arg-407) interacts with substrate.

Belongs to the class-I pyridoxal-phosphate-dependent aminotransferase family. Pyridoxal 5'-phosphate is required as a cofactor.

It carries out the reaction 3-phenylpyruvate + L-tryptophan = indole-3-pyruvate + L-phenylalanine. Its pathway is secondary metabolite biosynthesis. Aminotransferase; part of the gene cluster that mediates the biosynthesis of terrequinone A, an antitumor agent. The first step in the biosynthetic pathway for terrequinone A is formation of indole pyruvic acid (IPA) from L-tryptophan by the aminotransferase tdiD. The nonribosomal peptide synthase tdiA then immediately converts unstable IPA to didemethylasterriquinone D (DDAQ D), via condensation of 2 IPA molecules. The symmetric connectivity of the 2 IPA molecules is thought to arise by head-to-tail dual Claisen condensations facilitated by the TE domain. TdiB then catalyzes reverse prenylation by transferring dimethylallyl diphosphate to carbon atom 2' of DDAQ D, to yield asterriquinone C-1. Finally, tdiC and tdiE enzymes robustly convert asterriquinone C-1 to terrequinone A via a transformation involving regular prenylation at carbon atom 5, which requires elimination of the hydroxy group on C-5. The sequence is that of Aminotransferase tdiD from Emericella nidulans (strain FGSC A4 / ATCC 38163 / CBS 112.46 / NRRL 194 / M139) (Aspergillus nidulans).